Consider the following 315-residue polypeptide: Olfactory receptor 4A5 (315 aa).

The Extracellular segment spans residues 1 to 23; the sequence is MRQNNNITEFVLLGFSQDPGVQK. N-linked (GlcNAc...) asparagine glycosylation is present at N6. A helical membrane pass occupies residues 24 to 47; that stretch reads ALFVMFLLTYLVTVVGNLLIVVDI. Topologically, residues 48 to 55 are cytoplasmic; the sequence is IASPSLGS. A helical membrane pass occupies residues 56–77; sequence PMYFFLACLSFIDAAYSTTISP. Residues 78–98 are Extracellular-facing; that stretch reads KLIVGLFCDKKTISFQGCMGQ. C95 and C186 are joined by a disulfide. Residues 99–118 traverse the membrane as a helical segment; it reads LFIDHFFGGAEVFLLVVMAC. Topologically, residues 119 to 137 are cytoplasmic; the sequence is DRYVAICKPLHYLTIMNRQ. A helical membrane pass occupies residues 138–156; it reads VCFLLLVVAMIGGFVHSAF. The Extracellular portion of the chain corresponds to 157–192; the sequence is QIVVYSLPFCGPNVIVHFSCDMHPLLELACTDTYFI. A helical membrane pass occupies residues 193 to 216; that stretch reads GLTVVVNSGAICMVIFNLLLISYG. The Cytoplasmic segment spans residues 217–232; that stretch reads VILSSLKTYSQEKRGK. The helical transmembrane segment at 233–255 threads the bilayer; sequence ALSTCSSGSTVVVLFFVPCIFIY. Over 256-266 the chain is Extracellular; the sequence is VRPVSNFPTDK. A helical membrane pass occupies residues 267-286; the sequence is FMTVFYTIITHMLSPLIYTL. Residues 287–315 lie on the Cytoplasmic side of the membrane; that stretch reads RNSEMRNAIEKLLGKKLTIFIIGGVSVLM.

Belongs to the G-protein coupled receptor 1 family.

It localises to the cell membrane. Its function is as follows. Odorant receptor. This Homo sapiens (Human) protein is Olfactory receptor 4A5 (OR4A5).